The following is a 133-amino-acid chain: Small ribosomal subunit protein uS8 (133 aa).

This sequence belongs to the universal ribosomal protein uS8 family. Part of the 30S ribosomal subunit. Contacts proteins S5 and S12.

One of the primary rRNA binding proteins, it binds directly to 16S rRNA central domain where it helps coordinate assembly of the platform of the 30S subunit. The chain is Small ribosomal subunit protein uS8 from Prochlorococcus marinus subsp. pastoris (strain CCMP1986 / NIES-2087 / MED4).